Here is a 741-residue protein sequence, read N- to C-terminus: Cysteine--tRNA ligase, cytoplasmic (741 aa).

C46 provides a ligand contact to Zn(2+). A 'HIGH' region motif is present at residues 48–58 (PTVYDASHMGH). Residue S297 is modified to Phosphoserine. Residues C340, H365, and E369 each contribute to the Zn(2+) site. The short motif at 398–402 (KMSKS) is the 'KMSKS' region element. Position 401 (K401) interacts with ATP.

This sequence belongs to the class-I aminoacyl-tRNA synthetase family. Zn(2+) is required as a cofactor.

The protein localises to the cytoplasm. It catalyses the reaction tRNA(Cys) + L-cysteine + ATP = L-cysteinyl-tRNA(Cys) + AMP + diphosphate. This Drosophila pseudoobscura pseudoobscura (Fruit fly) protein is Cysteine--tRNA ligase, cytoplasmic (Aats-cys).